A 381-amino-acid chain; its full sequence is MIDTLRPVPFASEMAISKTVAWLNEQLELGNERLLLMDCRPQELYESSHIESAINVAIPGIMLRRLQKGNLPVRALFTRGEDRDRFTRRCGTDTVVLYDESSSDWNENTGGESVLGLLLKKLKDEGCRAFYLEGGFSKFQAEFSLHCETNLDGSCSSSSPPLPVLGLGGLRISSDSSSDIESDLDRDPNSATDSDGSPLSNSQPSFPVEILPFLYLGCAKDSTNLDVLEEFGIKYILNVTPNLPNLFENAGEFKYKQIPISDHWSQNLSQFFPEAISFIDEARGKNCGVLVHCLAGISRSVTVTVAYLMQKLNLSMNDAYDIVKMKKSNISPNFNFMGQLLDFERTLGLSSPCDNRVPAQQLYFTTPSNQNVYQVDSLQST.

The region spanning 30–148 is the Rhodanese domain; the sequence is GNERLLLMDC…FQAEFSLHCE (119 aa). The tract at residues 176–203 is disordered; it reads SSSDIESDLDRDPNSATDSDGSPLSNSQ. Over residues 189–203 the composition is skewed to polar residues; it reads NSATDSDGSPLSNSQ. In terms of domain architecture, Tyrosine-protein phosphatase spans 206-349; the sequence is FPVEILPFLY…LLDFERTLGL (144 aa). Cys293 acts as the Phosphocysteine intermediate in catalysis.

It belongs to the protein-tyrosine phosphatase family. Non-receptor class dual specificity subfamily. Interacts with MAPK1/ERK2. Post-translationally, ubiquitinated by the SCF(FBXO31) complex, leading to its proteasomal degradation. In terms of tissue distribution, expressed in keratinocytes (at protein level).

The protein resides in the cytoplasm. The catalysed reaction is O-phospho-L-tyrosyl-[protein] + H2O = L-tyrosyl-[protein] + phosphate. It carries out the reaction O-phospho-L-seryl-[protein] + H2O = L-seryl-[protein] + phosphate. The enzyme catalyses O-phospho-L-threonyl-[protein] + H2O = L-threonyl-[protein] + phosphate. In terms of biological role, dual specificity protein phosphatase, which mediates dephosphorylation and inactivation of MAP kinases. Has a specificity for the ERK family. Plays an important role in alleviating chronic postoperative pain. Necessary for the normal dephosphorylation of the long-lasting phosphorylated forms of spinal MAPK1/3 and MAP kinase p38 induced by peripheral surgery, which drives the resolution of acute postoperative allodynia. Also important for dephosphorylation of MAPK1/3 in local wound tissue, which further contributes to resolution of acute pain. Promotes cell differentiation by regulating MAPK1/MAPK3 activity and regulating the expression of AP1 transcription factors. The sequence is that of Dual specificity protein phosphatase 6 (DUSP6) from Homo sapiens (Human).